The sequence spans 435 residues: Probable glycine dehydrogenase (decarboxylating) subunit 1 (435 aa).

Belongs to the GcvP family. N-terminal subunit subfamily. In terms of assembly, the glycine cleavage system is composed of four proteins: P, T, L and H. In this organism, the P 'protein' is a heterodimer of two subunits.

It catalyses the reaction N(6)-[(R)-lipoyl]-L-lysyl-[glycine-cleavage complex H protein] + glycine + H(+) = N(6)-[(R)-S(8)-aminomethyldihydrolipoyl]-L-lysyl-[glycine-cleavage complex H protein] + CO2. Functionally, the glycine cleavage system catalyzes the degradation of glycine. The P protein binds the alpha-amino group of glycine through its pyridoxal phosphate cofactor; CO(2) is released and the remaining methylamine moiety is then transferred to the lipoamide cofactor of the H protein. This Coprothermobacter proteolyticus (strain ATCC 35245 / DSM 5265 / OCM 4 / BT) protein is Probable glycine dehydrogenase (decarboxylating) subunit 1.